A 364-amino-acid chain; its full sequence is Fructose-1,6-bisphosphatase class 1 2 (364 aa).

Mg(2+)-binding residues include glutamate 101, aspartate 123, leucine 125, and aspartate 126. Substrate is bound by residues 126–129 and asparagine 218; that span reads DGSS. Glutamate 290 serves as a coordination point for Mg(2+).

It belongs to the FBPase class 1 family. Homotetramer. Requires Mg(2+) as cofactor.

Its subcellular location is the cytoplasm. The enzyme catalyses beta-D-fructose 1,6-bisphosphate + H2O = beta-D-fructose 6-phosphate + phosphate. The protein operates within carbohydrate biosynthesis; gluconeogenesis. The protein is Fructose-1,6-bisphosphatase class 1 2 of Cupriavidus necator (strain ATCC 17699 / DSM 428 / KCTC 22496 / NCIMB 10442 / H16 / Stanier 337) (Ralstonia eutropha).